We begin with the raw amino-acid sequence, 200 residues long: BREX protein BrxB (200 aa).

It belongs to the BrxB family.

Its function is as follows. BREX systems (bacteriophage exclusion) provide immunity against bacteriophage. Part of a type 1 BREX system which protects against dsDNA phage. This system allows phage adsorption but prevents phage DNA replication, without degradation of the phage DNA. Methylation of bacterial DNA by PglX guides self/non-self discrimination. When the brxA-brxB-brxC-pglX-pglZ-brxL genes are transformed into a susceptible E.coli strain (BW25113) they confer very high resistance to infection by bacteriophage VR7 and VpaE1, about 100-fold protection against lambda, T5 and T7 and no protection against RNA phage Qbeta, ssDNA phage M13 or dSDNA phage T4 and VR5. Glycosylated phage DNA is not susceptible to BREX. The BREX system does not confer resistance to lysogenic lambda phage, i.e. prophage that are integrated into the chromosomal DNA and then induced to form phage. This is BREX protein BrxB from Escherichia coli O9:H4 (strain HS).